A 258-amino-acid chain; its full sequence is MNTQTTPSPQFYLTAPAACPYLPHEMERKVFTHLVGPRAAEMNDILTQGGFRRSQNIAYRPACESCRACVSVRILAQEFEPTKSMKRVLAANSDVIATEFAAQPSSEQYSLFRRYLDFRHQQGGMSDMTVLDYAIMVEDTHVNTRIIEYRRREEGSGLEQRPKGELLAAALTDTMSDGLSMVYSYFNPALEQRSLGTFMILDHVRRTKALGLPHVYLGYWVQGSRKMDYKTRFQPQEHLTPRGWERFDPSSMPESTHD.

This sequence belongs to the R-transferase family. Bpt subfamily.

It is found in the cytoplasm. It catalyses the reaction N-terminal L-glutamyl-[protein] + L-leucyl-tRNA(Leu) = N-terminal L-leucyl-L-glutamyl-[protein] + tRNA(Leu) + H(+). It carries out the reaction N-terminal L-aspartyl-[protein] + L-leucyl-tRNA(Leu) = N-terminal L-leucyl-L-aspartyl-[protein] + tRNA(Leu) + H(+). Its function is as follows. Functions in the N-end rule pathway of protein degradation where it conjugates Leu from its aminoacyl-tRNA to the N-termini of proteins containing an N-terminal aspartate or glutamate. The protein is Aspartate/glutamate leucyltransferase of Rhizobium johnstonii (strain DSM 114642 / LMG 32736 / 3841) (Rhizobium leguminosarum bv. viciae).